A 436-amino-acid chain; its full sequence is Proteasome-activating nucleotidase (436 aa).

A coiled-coil region spans residues 7 to 98 (KDVRDLCEKF…LRSDLQRMKK (92 aa)). Residues 223–228 (GTGKTL) and His-362 each bind ATP. Residues 434 to 436 (AYH) are docks into pockets in the proteasome alpha-ring to cause gate opening.

It belongs to the AAA ATPase family. Homohexamer. The hexameric complex has a two-ring architecture resembling a top hat that caps the 20S proteasome core at one or both ends. Upon ATP-binding, the C-terminus of PAN interacts with the alpha-rings of the proteasome core by binding to the intersubunit pockets.

It localises to the cytoplasm. Functionally, ATPase which is responsible for recognizing, binding, unfolding and translocation of substrate proteins into the archaeal 20S proteasome core particle. Is essential for opening the gate of the 20S proteasome via an interaction with its C-terminus, thereby allowing substrate entry and access to the site of proteolysis. Thus, the C-termini of the proteasomal ATPase function like a 'key in a lock' to induce gate opening and therefore regulate proteolysis. Unfolding activity requires energy from ATP hydrolysis, whereas ATP binding alone promotes ATPase-20S proteasome association which triggers gate opening, and supports translocation of unfolded substrates. In Methanopyrus kandleri (strain AV19 / DSM 6324 / JCM 9639 / NBRC 100938), this protein is Proteasome-activating nucleotidase.